A 588-amino-acid chain; its full sequence is Histone deacetylase 9 (588 aa).

Serine 22 is subject to Phosphoserine. The interaction with CTBP1 stretch occupies residues 23 to 27; that stretch reads PLDLR. The span at 110-147 shows a compositional bias: basic and acidic residues; it reads RQEQEVERHRREQQLPPLRGKDRGRERAVASTEVKQKL. Disordered regions lie at residues 110–170, 183–242, and 264–301; these read RQEQ…HSVG, TSLD…SSPL, and SSVSSSSPGSGPSSPNNGPAGNVTENEASALPPTPHPE. An interaction with MEF2 region spans residues 136 to 154; it reads RAVASTEVKQKLQEFLLSK. 2 stretches are compositionally biased toward polar residues: residues 154–166 and 185–199; these read KSATKDTPTNGKN and LDQSSPPLSGTSPSY. An interaction with MAPK10 region spans residues 175–343; sequence LWYTAAHHTS…LPAVPSPLNA (169 aa). The segment covering 208 to 219 has biased composition (basic and acidic residues); that stretch reads DSKDDFPLRKTA. Positions 218–261 are interaction with ETV6; that stretch reads TASEPNLKVRSRLKQKVAERRSSPLLRRKDGNLVTSFKKRVFEV. A Phosphoserine modification is found at serine 220. A compositionally biased stretch (basic and acidic residues) spans 233–242; that stretch reads KVAERRSSPL. Position 240 is a phosphoserine; by DYRK1B (serine 240). Low complexity predominate over residues 264 to 284; sequence SSVSSSSPGSGPSSPNNGPAG. Serine 450 bears the Phosphoserine mark. The interval 493 to 533 is disordered; the sequence is QLKQPGSHLEEAEEELQGDQSMEDRAASKDNSARSDSSACV. A compositionally biased stretch (basic and acidic residues) spans 514 to 525; sequence MEDRAASKDNSA. Serine 552 is subject to Phosphoserine.

Belongs to the histone deacetylase family. HD type 2 subfamily. As to quaternary structure, homodimer. Interacts with ETV6. Interacts with MEF2, HDAC1, HDAC3, HDAC4, HDAC5, CTBP1 and MAPK10. The phosphorylated form interacts with 14-3-3. Interacts with FOXP3 in the absence of T-cell stimulation. Post-translationally, sumoylated. In terms of processing, phosphorylated on Ser-220 and Ser-450; which promotes 14-3-3-binding, impairs interaction with MEF2, and antagonizes antimyogenic activity. Phosphorylated on Ser-240 by DYRK1B; which impairs nuclear accumulation. Phosphorylated by the PKC kinases PKN1 and PKN2, impairing nuclear import. Expressed at high levels in heart, brain and spleen. Expressed in skeletal muscle.

The protein localises to the nucleus. It catalyses the reaction N(6)-acetyl-L-lysyl-[histone] + H2O = L-lysyl-[histone] + acetate. In terms of biological role, devoided of intrinsic deacetylase activity, promotes the deacetylation of lysine residues on the N-terminal part of the core histones (H2A, H2B, H3 and H4) by recruiting HDAC1 and HDAC3. Histone deacetylation gives a tag for epigenetic repression and plays an important role in transcriptional regulation, cell cycle progression and developmental events. Represses MEF2-dependent transcription, inhibits skeletal myogenesis and may be involved in heart development. Protects neurons from apoptosis, both by inhibiting JUN phosphorylation by MAPK10 and by repressing JUN transcription via HDAC1 recruitment to JUN promoter. The chain is Histone deacetylase 9 (Hdac9) from Mus musculus (Mouse).